Reading from the N-terminus, the 313-residue chain is Calcium homeostasis modulator protein 6 (313 aa).

Residues 1 to 21 (MEKFKAVLDLQRKHRNALGYS) lie on the Cytoplasmic side of the membrane. Residues 22–37 (LVTLLTAGGEKIFSSV) traverse the membrane as a helical segment. Over 38–46 (VFQCPCTAT) the chain is Extracellular. Intrachain disulfides connect cysteine 41–cysteine 125, cysteine 43–cysteine 154, and cysteine 138–cysteine 145. Residues 47-68 (WNLPYGLVFLLVPALALFLLGY) traverse the membrane as a helical segment. Over 69–101 (ALSARTWRLLTGCCSRSARFSSGLRSAFVCAQL) the chain is Cytoplasmic. The chain crosses the membrane as a helical span at residues 102-126 (SMTAAFAPLTWVAVALLEGSFYQCA). At 127-167 (VSGSARLAPYLCKGRDPNCNATLPQAPCNKQKVEMQEILSQ) the chain is on the extracellular side. The chain crosses the membrane as a helical span at residues 168-190 (LKAQSQVFGWILIAAVIILLLLV). Over 191–313 (KSVTRCFSPV…DMSMTNTHEL (123 aa)) the chain is Cytoplasmic.

It belongs to the CALHM family. As to quaternary structure, oligomerizes to form decameric and undecameric channels. In terms of processing, N-glycosylated. Immune cells in primary and secondary lymphoid organs.

Its subcellular location is the cell membrane. It carries out the reaction ATP(in) = ATP(out). With respect to regulation, inhibited by Gd(3+). Partially inhibited by divalent ions Ca(2+) and Ba(2+). In terms of biological role, pore-forming subunit of an ATP-permeable channel. In response to pathogen-derived and proinflammatory stimuli, relocates from intracellular compartments to NK-dendritic cell and NK-macrophage immune synapses where it mediates ATP efflux and NK cell activation involved in antimicrobial and antitumor responses. May assemble to form gap junction channel-like structures with gating and ion conductance likely regulated by membrane lipids and voltage rather than by extracellular calcium levels. In Mus musculus (Mouse), this protein is Calcium homeostasis modulator protein 6.